Here is a 256-residue protein sequence, read N- to C-terminus: Nuclear shuttle protein (256 aa).

A Bipartite nuclear localization signal motif is present at residues 18 to 39 (NTTNRFPIRRKYVGGHTRPSVR). The Nuclear localization signal motif lies at 81–96 (SRGPSGDGRSRDYIKL). Residues 150 to 187 (ELFGAYSACYVNLRLLNNQQHRYRVLHSVKRFVSSAGD) are interaction with Arabidopsis thaliana NSI protein.

The protein belongs to the begomovirus nuclear shuttle protein family. As to quaternary structure, binds to single-stranded and double-stranded viral DNA. Interacts with the host nuclear shuttle interacting (NSI) protein. This interaction may allow NSP to recruit NSI monomers to the viral genome and thus regulate nuclear export of viral genome by NSP.

The protein resides in the host nucleus. It localises to the host cytoplasm. The protein localises to the host cell membrane. Functionally, binds to the genomic viral ssDNA, shuttles it into and out of the cell nucleus. Begomoviruses use 2 proteins to transport their DNA from cell to cell. The nuclear shuttle protein (NSP) shuttles it between nucleus and cytoplasm and the movement protein (MP) probably transports the DNA-NSP complex to the cell periphery and facilitates movement across the cell wall. The protein is Nuclear shuttle protein of Hewittia sublobata (Coralbush).